The following is a 244-amino-acid chain: Phosphonates import ATP-binding protein PhnC 2 (244 aa).

The 240-residue stretch at 3–242 (LRVEGLKKVY…ELTDYTVDQL (240 aa)) folds into the ABC transporter domain. 36-43 (GPSGAGKS) lines the ATP pocket.

This sequence belongs to the ABC transporter superfamily. Phosphonates importer (TC 3.A.1.9.1) family. In terms of assembly, the complex is composed of two ATP-binding proteins (PhnC), two transmembrane proteins (PhnE) and a solute-binding protein (PhnD).

The protein resides in the cell membrane. It carries out the reaction phosphonate(out) + ATP + H2O = phosphonate(in) + ADP + phosphate + H(+). Its function is as follows. Part of the ABC transporter complex PhnCDE involved in phosphonates import. Responsible for energy coupling to the transport system. The chain is Phosphonates import ATP-binding protein PhnC 2 from Halalkalibacterium halodurans (strain ATCC BAA-125 / DSM 18197 / FERM 7344 / JCM 9153 / C-125) (Bacillus halodurans).